A 200-amino-acid polypeptide reads, in one-letter code: dITP/XTP pyrophosphatase (200 aa).

Residue 7–12 (SNNYHK) participates in substrate binding. Asp-68 (proton acceptor) is an active-site residue. A Mg(2+)-binding site is contributed by Asp-68. Substrate contacts are provided by residues Ser-69, 147 to 150 (FGYD), Lys-170, and 175 to 176 (HR).

This sequence belongs to the HAM1 NTPase family. Homodimer. The cofactor is Mg(2+).

It carries out the reaction XTP + H2O = XMP + diphosphate + H(+). The catalysed reaction is dITP + H2O = dIMP + diphosphate + H(+). The enzyme catalyses ITP + H2O = IMP + diphosphate + H(+). Functionally, pyrophosphatase that catalyzes the hydrolysis of nucleoside triphosphates to their monophosphate derivatives, with a high preference for the non-canonical purine nucleotides XTP (xanthosine triphosphate), dITP (deoxyinosine triphosphate) and ITP. Seems to function as a house-cleaning enzyme that removes non-canonical purine nucleotides from the nucleotide pool, thus preventing their incorporation into DNA/RNA and avoiding chromosomal lesions. The polypeptide is dITP/XTP pyrophosphatase (Acholeplasma laidlawii (strain PG-8A)).